The sequence spans 501 residues: ADP,ATP carrier protein 3 (501 aa).

Helical transmembrane passes span 23 to 43 (LKLF…FGAL), 59 to 79 (IISL…TVLY), 90 to 110 (YIFY…AYII), 146 to 166 (YALM…LMFW), 183 to 203 (PVLG…LVFF), 227 to 247 (IMLQ…MLLF), 293 to 313 (IALL…PWKA), 326 to 346 (FNFM…FMVI), 361 to 381 (LLTP…IIFI), 383 to 403 (EIGA…VGAI), 446 to 466 (FGKS…PTAT), and 470 to 490 (IIIY…WNVI).

The protein belongs to the ADP/ATP translocase tlc family.

The protein resides in the cell membrane. Functionally, provides the rickettsial cell with host ATP in exchange for rickettsial ADP. This is an obligate exchange system. This energy acquiring activity is an important component of rickettsial parasitism. This is ADP,ATP carrier protein 3 (tlcC) from Rickettsia felis (strain ATCC VR-1525 / URRWXCal2) (Rickettsia azadi).